Consider the following 207-residue polypeptide: ATP synthase subunit b 2 (207 aa).

The chain crosses the membrane as a helical span at residues 53–72; that stretch reads TYASQLLWLVITFSVFYLLM.

Belongs to the ATPase B chain family. F-type ATPases have 2 components, F(1) - the catalytic core - and F(0) - the membrane proton channel. F(1) has five subunits: alpha(3), beta(3), gamma(1), delta(1), epsilon(1). F(0) has three main subunits: a(1), b(2) and c(10-14). The alpha and beta chains form an alternating ring which encloses part of the gamma chain. F(1) is attached to F(0) by a central stalk formed by the gamma and epsilon chains, while a peripheral stalk is formed by the delta and b chains.

The protein resides in the cell inner membrane. Its function is as follows. F(1)F(0) ATP synthase produces ATP from ADP in the presence of a proton or sodium gradient. F-type ATPases consist of two structural domains, F(1) containing the extramembraneous catalytic core and F(0) containing the membrane proton channel, linked together by a central stalk and a peripheral stalk. During catalysis, ATP synthesis in the catalytic domain of F(1) is coupled via a rotary mechanism of the central stalk subunits to proton translocation. Component of the F(0) channel, it forms part of the peripheral stalk, linking F(1) to F(0). The b'-subunit is a diverged and duplicated form of b found in plants and photosynthetic bacteria. This Rhizobium leguminosarum bv. trifolii (strain WSM2304) protein is ATP synthase subunit b 2 (atpF2).